A 1418-amino-acid chain; its full sequence is Sterol 3-beta-glucosyltransferase (1418 aa).

The segment covering 1–16 has biased composition (basic and acidic residues); that stretch reads MRPFLDDAKRRVDRKL. Disordered regions lie at residues 1–59, 83–188, and 207–233; these read MRPF…SREG, ARFD…RSAT, and LKAS…ASVS. Over residues 18-28 the composition is skewed to polar residues; the sequence is ASRQSLSTSRL. Composition is skewed to basic and acidic residues over residues 35-44 and 95-105; these read DRLKDNHDAQ and SEQRPRKESSV. Positions 106–115 are enriched in polar residues; that stretch reads RKGTSASANT. A compositionally biased stretch (low complexity) spans 116-126; that stretch reads SSPLDSSQRSS. Basic and acidic residues-rich tracts occupy residues 127–139 and 147–166; these read SRTD…ESGT and TISD…HEPQ. Polar residues predominate over residues 209–219; sequence ASSTERSQPSL. The region spanning 249-288 is the GRAM 1 domain; it reads EKVLVEYACSLLQSILLQGYMYVTEGHICFYAYLPKKSTV. Residues 289 to 387 form the PH domain; the sequence is AIKSGYLYKR…WVKALQKVIF (99 aa). The segment at 462–651 is disordered; sequence ISSQHLSPQP…DPTKSFSGAP (190 aa). The segment covering 486–497 has biased composition (polar residues); that stretch reads RWSLTSGTSRVL. Residues 508 to 519 are compositionally biased toward low complexity; it reads ASASTSHTSLAH. Residues 534–575 show a composition bias toward polar residues; the sequence is SESILNSFEQGTESSAAWQSMTDAAESASQILNRSDVFQSPT. Over residues 578–598 the composition is skewed to basic and acidic residues; the sequence is GLDRRPSGGERRGRRNSDETA. Residues 599–612 are compositionally biased toward polar residues; the sequence is RSLSTRANVGTGQQ. Residues 615–633 are compositionally biased toward basic and acidic residues; the sequence is ELGRRMDGDTSGREARDST. Over residues 635–651 the composition is skewed to polar residues; sequence ESDQYTQDPTKSFSGAP. Residues 733 to 799 enclose the GRAM 2 domain; sequence DRFRAHFALP…RDIENVEKEK (67 aa). UDP-alpha-D-glucose contacts are provided by Ser920, Arg921, Asp923, Ala1223, His1225, His1238, Gly1242, Thr1243, Asp1262, and Gln1263. The segment at 1339–1418 is disordered; that stretch reads SIASSTPFSP…SGPGRKLSGR (80 aa). A compositionally biased stretch (low complexity) spans 1341-1355; it reads ASSTPFSPTPSAKTT. Residues 1358 to 1379 show a composition bias toward acidic residues; sequence QDADDDVEDSEEWTFVGDDTDM. Positions 1380 to 1391 are enriched in basic and acidic residues; the sequence is EMSRRLRDRAIS.

The protein belongs to the glycosyltransferase 28 family.

It localises to the cytoplasm. The protein localises to the preautophagosomal structure membrane. The enzyme catalyses a sterol + UDP-alpha-D-glucose = a sterol 3-beta-D-glucoside + UDP + H(+). The catalysed reaction is ergosterol + UDP-alpha-D-glucose = ergosteryl 3-beta-D-glucoside + UDP + H(+). In terms of biological role, sterol glycosyltransferase responsible for the glycosylation of ergosterol to form ergosterol-glucoside. This chain is Sterol 3-beta-glucosyltransferase, found in Neosartorya fischeri (strain ATCC 1020 / DSM 3700 / CBS 544.65 / FGSC A1164 / JCM 1740 / NRRL 181 / WB 181) (Aspergillus fischerianus).